Reading from the N-terminus, the 431-residue chain is UDP-N-acetylmuramate--L-alanine ligase (431 aa).

108–114 (GAHGKST) lines the ATP pocket.

This sequence belongs to the MurCDEF family.

It localises to the cytoplasm. The enzyme catalyses UDP-N-acetyl-alpha-D-muramate + L-alanine + ATP = UDP-N-acetyl-alpha-D-muramoyl-L-alanine + ADP + phosphate + H(+). It functions in the pathway cell wall biogenesis; peptidoglycan biosynthesis. In terms of biological role, cell wall formation. The sequence is that of UDP-N-acetylmuramate--L-alanine ligase from Campylobacter jejuni subsp. jejuni serotype O:23/36 (strain 81-176).